Here is a 484-residue protein sequence, read N- to C-terminus: tRNA sulfurtransferase (484 aa).

In terms of domain architecture, THUMP spans 63-167 (QAFGERLACI…GDKLYMVTKR (105 aa)). ATP-binding positions include 185-186 (LI), K267, G289, and Q298. C346 and C458 form a disulfide bridge. Positions 406–484 (IDTNEVVIDI…GYHNVKVYRP (79 aa)) constitute a Rhodanese domain. C458 serves as the catalytic Cysteine persulfide intermediate.

It belongs to the ThiI family.

The protein resides in the cytoplasm. It carries out the reaction [ThiI sulfur-carrier protein]-S-sulfanyl-L-cysteine + a uridine in tRNA + 2 reduced [2Fe-2S]-[ferredoxin] + ATP + H(+) = [ThiI sulfur-carrier protein]-L-cysteine + a 4-thiouridine in tRNA + 2 oxidized [2Fe-2S]-[ferredoxin] + AMP + diphosphate. The enzyme catalyses [ThiS sulfur-carrier protein]-C-terminal Gly-Gly-AMP + S-sulfanyl-L-cysteinyl-[cysteine desulfurase] + AH2 = [ThiS sulfur-carrier protein]-C-terminal-Gly-aminoethanethioate + L-cysteinyl-[cysteine desulfurase] + A + AMP + 2 H(+). It participates in cofactor biosynthesis; thiamine diphosphate biosynthesis. Functionally, catalyzes the ATP-dependent transfer of a sulfur to tRNA to produce 4-thiouridine in position 8 of tRNAs, which functions as a near-UV photosensor. Also catalyzes the transfer of sulfur to the sulfur carrier protein ThiS, forming ThiS-thiocarboxylate. This is a step in the synthesis of thiazole, in the thiamine biosynthesis pathway. The sulfur is donated as persulfide by IscS. This Shewanella sp. (strain ANA-3) protein is tRNA sulfurtransferase.